A 558-amino-acid polypeptide reads, in one-letter code: 2-isopropylmalate synthase (558 aa).

The Pyruvate carboxyltransferase domain occupies 30 to 303; it reads PIWCSVDLRD…DPGIDCSDIN (274 aa). Residues Asp39, His242, His244, and Asn278 each contribute to the Mg(2+) site. Residues 437-558 are regulatory domain; that stretch reads QPGARLKFLD…ANRIVGRKAR (122 aa).

Belongs to the alpha-IPM synthase/homocitrate synthase family. LeuA type 2 subfamily. In terms of assembly, homodimer. It depends on Mg(2+) as a cofactor.

It is found in the cytoplasm. The enzyme catalyses 3-methyl-2-oxobutanoate + acetyl-CoA + H2O = (2S)-2-isopropylmalate + CoA + H(+). It participates in amino-acid biosynthesis; L-leucine biosynthesis; L-leucine from 3-methyl-2-oxobutanoate: step 1/4. Catalyzes the condensation of the acetyl group of acetyl-CoA with 3-methyl-2-oxobutanoate (2-ketoisovalerate) to form 3-carboxy-3-hydroxy-4-methylpentanoate (2-isopropylmalate). The sequence is that of 2-isopropylmalate synthase from Mesorhizobium japonicum (strain LMG 29417 / CECT 9101 / MAFF 303099) (Mesorhizobium loti (strain MAFF 303099)).